Reading from the N-terminus, the 429-residue chain is Probable M18 family aminopeptidase 2 (429 aa).

His-82, His-156, and His-401 together coordinate Zn(2+).

This sequence belongs to the peptidase M18 family. It depends on Zn(2+) as a cofactor.

In Pseudomonas aeruginosa (strain UCBPP-PA14), this protein is Probable M18 family aminopeptidase 2.